Reading from the N-terminus, the 251-residue chain is Ubiquinone/menaquinone biosynthesis C-methyltransferase UbiE (251 aa).

S-adenosyl-L-methionine-binding positions include Thr-74, Asp-95, and 123–124 (NA).

Belongs to the class I-like SAM-binding methyltransferase superfamily. MenG/UbiE family.

The enzyme catalyses a 2-demethylmenaquinol + S-adenosyl-L-methionine = a menaquinol + S-adenosyl-L-homocysteine + H(+). It carries out the reaction a 2-methoxy-6-(all-trans-polyprenyl)benzene-1,4-diol + S-adenosyl-L-methionine = a 5-methoxy-2-methyl-3-(all-trans-polyprenyl)benzene-1,4-diol + S-adenosyl-L-homocysteine + H(+). Its pathway is quinol/quinone metabolism; menaquinone biosynthesis; menaquinol from 1,4-dihydroxy-2-naphthoate: step 2/2. It participates in cofactor biosynthesis; ubiquinone biosynthesis. Functionally, methyltransferase required for the conversion of demethylmenaquinol (DMKH2) to menaquinol (MKH2) and the conversion of 2-polyprenyl-6-methoxy-1,4-benzoquinol (DDMQH2) to 2-polyprenyl-3-methyl-6-methoxy-1,4-benzoquinol (DMQH2). This chain is Ubiquinone/menaquinone biosynthesis C-methyltransferase UbiE, found in Edwardsiella ictaluri (strain 93-146).